The sequence spans 201 residues: Large ribosomal subunit protein uL4 (201 aa).

The disordered stretch occupies residues 43-71 (TRAQKTRSDVSGGGKKPWRQKGTGRARSG).

Belongs to the universal ribosomal protein uL4 family. In terms of assembly, part of the 50S ribosomal subunit.

Its function is as follows. One of the primary rRNA binding proteins, this protein initially binds near the 5'-end of the 23S rRNA. It is important during the early stages of 50S assembly. It makes multiple contacts with different domains of the 23S rRNA in the assembled 50S subunit and ribosome. Functionally, forms part of the polypeptide exit tunnel. The polypeptide is Large ribosomal subunit protein uL4 (Psychromonas ingrahamii (strain DSM 17664 / CCUG 51855 / 37)).